The chain runs to 277 residues: MTPLDTSAAAIFAANRAQGAVKFDVRLQDGMTRRGRVQESGSLRVRFPSPEAEGLSAVFINTAGGIAGGDRFDTDIAAGEGTRLTLTTAAAEKLYRAAGAPAQIRIALAAAANAHLAWLPQETILFDQARVARSIDIDLAETASLLLCEIVVFGRAAMGERMLSGEFVDRWRLRRGGRLVFAETVRLDGDIGATLAHRAVANGAAAIGTALIVPGDEALVQRIRDSAPSFSGEVGISAWNGFAMARFCAQDAARLRTDMMAVLGCASGTALPRLWLS.

Belongs to the UreD family. As to quaternary structure, ureD, UreF and UreG form a complex that acts as a GTP-hydrolysis-dependent molecular chaperone, activating the urease apoprotein by helping to assemble the nickel containing metallocenter of UreC. The UreE protein probably delivers the nickel.

Its subcellular location is the cytoplasm. Functionally, required for maturation of urease via the functional incorporation of the urease nickel metallocenter. This Rhodopseudomonas palustris (strain BisB18) protein is Urease accessory protein UreD.